We begin with the raw amino-acid sequence, 236 residues long: Regulatory protein cys-3 (236 aa).

Positions 26–89 (TLGQLQPIQP…MSVPPTPGAR (64 aa)) are disordered. Residues 28–37 (GQLQPIQPNP) show a composition bias toward polar residues. One can recognise a bZIP domain in the interval 99–162 (LAAEEDKRKR…KWLKGLVTEK (64 aa)). A basic motif region spans residues 105–137 (KRKRNTAASARFRIKKKQREQALEKSAKEMSEK). The tract at residues 141–155 (LEGRIQALETENKWL) is leucine-zipper. Positions 189 to 236 (AAAADKAEAAADKADAERAREESSFCVSTSSPSSDESVDTDNKKRRKD) are disordered. Positions 193–211 (DKAEAAADKADAERAREES) are enriched in basic and acidic residues. The segment covering 212 to 223 (SFCVSTSSPSSD) has biased composition (low complexity).

Belongs to the bZIP family. GCN4 subfamily. As to quaternary structure, binds DNA as a dimer.

Its subcellular location is the nucleus. Its function is as follows. Turns on the expression of structural genes which encode sulfur-catabolic enzymes. Binds to sequence elements upstream of these genes. This Neurospora crassa (strain ATCC 24698 / 74-OR23-1A / CBS 708.71 / DSM 1257 / FGSC 987) protein is Regulatory protein cys-3 (cys-3).